A 188-amino-acid chain; its full sequence is Cell division protein SepF (188 aa).

The protein belongs to the SepF family. As to quaternary structure, homodimer. Interacts with FtsZ.

The protein localises to the cytoplasm. In terms of biological role, cell division protein that is part of the divisome complex and is recruited early to the Z-ring. Probably stimulates Z-ring formation, perhaps through the cross-linking of FtsZ protofilaments. Its function overlaps with FtsA. This is Cell division protein SepF from Synechococcus sp. (strain CC9605).